The primary structure comprises 276 residues: Pantothenate synthetase (276 aa).

27–34 (MGALHKGH) serves as a coordination point for ATP. H34 serves as the catalytic Proton donor. Q58 lines the (R)-pantoate pocket. Q58 contacts beta-alanine. 147-150 (GKKD) is an ATP binding site. Q153 contacts (R)-pantoate. ATP-binding positions include V176 and 184–187 (LSSR).

Belongs to the pantothenate synthetase family. In terms of assembly, homodimer.

The protein resides in the cytoplasm. It catalyses the reaction (R)-pantoate + beta-alanine + ATP = (R)-pantothenate + AMP + diphosphate + H(+). Its pathway is cofactor biosynthesis; (R)-pantothenate biosynthesis; (R)-pantothenate from (R)-pantoate and beta-alanine: step 1/1. Catalyzes the condensation of pantoate with beta-alanine in an ATP-dependent reaction via a pantoyl-adenylate intermediate. This Helicobacter pylori (strain Shi470) protein is Pantothenate synthetase.